We begin with the raw amino-acid sequence, 595 residues long: Alpha-1,3-galactosidase B (595 aa).

An N-terminal signal peptide occupies residues 1-22 (MKTILLFALSLLLSLSVSDVCA). PbH1 repeat units follow at residues 432–454 (TPEV…LFST), 455–477 (PKKT…LLCG), and 488–541 (CRDV…VIED).

Belongs to the glycosyl hydrolase 110 family. B subfamily.

It catalyses the reaction Hydrolysis of terminal, non-reducing branched (1-&gt;3)-alpha-D-galactosidic residues, producing free D-galactose.. The enzyme catalyses Hydrolysis of terminal, non-reducing linear (1-&gt;3)-alpha-D-galactosidic residues, producing free D-galactose.. It carries out the reaction Hydrolysis of terminal, non-reducing alpha-D-galactose residues in alpha-D-galactosides, including galactose oligosaccharides, galactomannans and galactolipids.. In terms of biological role, alpha-galactosidase. Removes both branched alpha-1,3-linked galactose residues of blood group B antigens and linear alpha-1,3-linked galactose structures. In Bacteroides fragilis (strain YCH46), this protein is Alpha-1,3-galactosidase B (glaB).